A 253-amino-acid chain; its full sequence is Triosephosphate isomerase (253 aa).

9-11 (NWK) contacts substrate. Residue His-97 is the Electrophile of the active site. Glu-169 serves as the catalytic Proton acceptor. Substrate is bound by residues Gly-175, Ser-215, and 236 to 237 (GG).

The protein belongs to the triosephosphate isomerase family. In terms of assembly, homodimer.

It localises to the cytoplasm. It catalyses the reaction D-glyceraldehyde 3-phosphate = dihydroxyacetone phosphate. It functions in the pathway carbohydrate biosynthesis; gluconeogenesis. The protein operates within carbohydrate degradation; glycolysis; D-glyceraldehyde 3-phosphate from glycerone phosphate: step 1/1. Functionally, involved in the gluconeogenesis. Catalyzes stereospecifically the conversion of dihydroxyacetone phosphate (DHAP) to D-glyceraldehyde-3-phosphate (G3P). The chain is Triosephosphate isomerase from Staphylococcus epidermidis (strain ATCC 35984 / DSM 28319 / BCRC 17069 / CCUG 31568 / BM 3577 / RP62A).